The chain runs to 356 residues: Phospho-2-dehydro-3-deoxyheptonate aldolase, Tyr-sensitive (356 aa).

Belongs to the class-I DAHP synthase family. The cofactor is a divalent metal cation.

The catalysed reaction is D-erythrose 4-phosphate + phosphoenolpyruvate + H2O = 7-phospho-2-dehydro-3-deoxy-D-arabino-heptonate + phosphate. It functions in the pathway metabolic intermediate biosynthesis; chorismate biosynthesis; chorismate from D-erythrose 4-phosphate and phosphoenolpyruvate: step 1/7. With respect to regulation, specifically feedback inhibited by tyrosine with 50% inhibition observed at 9 microM tyrosine, pH 7.0. In terms of biological role, stereospecific condensation of phosphoenolpyruvate (PEP) and D-erythrose-4-phosphate (E4P) giving rise to 3-deoxy-D-arabino-heptulosonate-7-phosphate (DAHP). This is Phospho-2-dehydro-3-deoxyheptonate aldolase, Tyr-sensitive (aroF) from Escherichia coli (strain K12).